The sequence spans 96 residues: Nucleoid-associated protein TC_0612 (96 aa).

It belongs to the YbaB/EbfC family. Homodimer.

The protein localises to the cytoplasm. Its subcellular location is the nucleoid. Its function is as follows. Binds to DNA and alters its conformation. May be involved in regulation of gene expression, nucleoid organization and DNA protection. This is Nucleoid-associated protein TC_0612 from Chlamydia muridarum (strain MoPn / Nigg).